The following is a 448-amino-acid chain: Damage-control phosphatase ARMT1 (448 aa).

The Mn(2+) site is built by D257 and N258. 257–258 (DN) contributes to the substrate binding site. The S-adenosyl-L-methionine site is built by E262 and D295. D295 contributes to the Mn(2+) binding site. Substrate is bound by residues 371 to 375 (DLNYR) and K408. The Subfamily III RTxK motif motif lies at 405–408 (RTLK).

The protein belongs to the damage-control phosphatase family. Sugar phosphate phosphatase III subfamily. Mn(2+) serves as cofactor. It depends on Ni(2+) as a cofactor. Automethylated.

It catalyses the reaction beta-D-fructose 1-phosphate + H2O = D-fructose + phosphate. The catalysed reaction is beta-D-fructose 6-phosphate = dihydroxyacetone + D-glyceraldehyde 3-phosphate. The enzyme catalyses L-glutamyl-[protein] + S-adenosyl-L-methionine = [protein]-L-glutamate 5-O-methyl ester + S-adenosyl-L-homocysteine. Functionally, metal-dependent phosphatase that shows phosphatase activity against several substrates, including fructose-1-phosphate and fructose-6-phosphate. Its preference for fructose-1-phosphate, a strong glycating agent that causes DNA damage rather than a canonical yeast metabolite, suggests a damage-control function in hexose phosphate metabolism. Has also been shown to have O-methyltransferase activity that methylates glutamate residues of target proteins to form gamma-glutamyl methyl ester residues. Possibly methylates PCNA, suggesting it is involved in the DNA damage response. This is Damage-control phosphatase ARMT1 from Danio rerio (Zebrafish).